Here is a 151-residue protein sequence, read N- to C-terminus: Protein ripply1 (151 aa).

A WRPW motif motif is present at residues 57 to 60 (WRPW). Positions 96–131 (HPVRLFWPKSRSFDYLYSAGEILLQNFPVQATINLY) are ripply homology domain. Residues 130-151 (LYEDSDSEEEEEDEEQEDEEEK) form a disordered region. Positions 132-151 (EDSDSEEEEEDEEQEDEEEK) are enriched in acidic residues.

It belongs to the ripply family.

Its subcellular location is the nucleus. Functionally, plays a role in somitogenesis. Essential for transcriptional repression of the segmental patterning genes, thus terminating the segmentation program in the presomitic mesoderm, and also required for the maintenance of rostrocaudal polarity in somites. This is Protein ripply1 from Homo sapiens (Human).